The following is a 305-amino-acid chain: Heterogeneous nuclear ribonucleoprotein A0 (305 aa).

The residue at position 1 (methionine 1) is an N-acetylmethionine. One can recognise an RRM 1 domain in the interval 7–86 (CKLFIGGLNV…VELKRAVSRE (80 aa)). At serine 68 the chain carries Phosphoserine. Residue lysine 80 forms a Glycyl lysine isopeptide (Lys-Gly) (interchain with G-Cter in SUMO2) linkage. At serine 84 the chain carries Phosphoserine; by MAPKAPK2. Residues lysine 96, lysine 98, lysine 99, and lysine 106 each participate in a glycyl lysine isopeptide (Lys-Gly) (interchain with G-Cter in SUMO2) cross-link. One can recognise an RRM 2 domain in the interval 98–175 (KKLFVGGLKG…HRVEVKKAVP (78 aa)). Lysine 133 bears the N6-acetyllysine mark. Omega-N-methylarginine is present on arginine 139. Residues lysine 154, lysine 159, lysine 172, and lysine 176 each participate in a glycyl lysine isopeptide (Lys-Gly) (interchain with G-Cter in SUMO2) cross-link. Disordered stretches follow at residues 174–214 (VPKE…KGGG) and 262–305 (QSSY…GSSF). Composition is skewed to gly residues over residues 181–200 (SGGG…GRGR) and 269–281 (KSGG…GSSW). Position 188 is a phosphoserine (serine 188). Residue arginine 284 is modified to Omega-N-methylarginine. The span at 290-305 (YRGGYGGGGGYGGSSF) shows a compositional bias: gly residues. The residue at position 291 (arginine 291) is an Asymmetric dimethylarginine; alternate. Position 291 is a dimethylated arginine; alternate (arginine 291). The residue at position 291 (arginine 291) is an Omega-N-methylarginine; alternate.

In terms of processing, phosphorylated at Ser-84 by MAPKAPK2 in response to LPS treatment, promoting stabilization of GADD45A mRNA. Arg-291 is dimethylated, probably to asymmetric dimethylarginine.

Its subcellular location is the nucleus. In terms of biological role, mRNA-binding component of ribonucleosomes. Specifically binds AU-rich element (ARE)-containing mRNAs. Involved in post-transcriptional regulation of cytokines mRNAs. This Homo sapiens (Human) protein is Heterogeneous nuclear ribonucleoprotein A0 (HNRNPA0).